A 134-amino-acid chain; its full sequence is MVVAPYLAVAIGGSLGAMSRYLVTIMAQNAWGIKFPYGTLLVNTLGSFLAGFFLIVLVGRFSAEESFRLFLFTGFLGAFTTFSSFAAESLFMFEQGYWFKLITNILVNNVGSLSMVFVGTLVAKYVLLGHQGSN.

The next 4 helical transmembrane spans lie at 7 to 27 (LAVA…TIMA), 38 to 58 (GTLL…IVLV), 69 to 89 (LFLF…AAES), and 110 to 130 (VGSL…LLGH). Residues glycine 77 and threonine 80 each contribute to the Na(+) site.

This sequence belongs to the fluoride channel Fluc/FEX (TC 1.A.43) family.

The protein resides in the cell inner membrane. The catalysed reaction is fluoride(in) = fluoride(out). With respect to regulation, na(+) is not transported, but it plays an essential structural role and its presence is essential for fluoride channel function. In terms of biological role, fluoride-specific ion channel. Important for reducing fluoride concentration in the cell, thus reducing its toxicity. In Legionella pneumophila (strain Lens), this protein is Fluoride-specific ion channel FluC.